Reading from the N-terminus, the 169-residue chain is Ribosome maturation factor RimM (169 aa).

The PRC barrel domain occupies 93–167 (PENSFFISDI…KISVILPKGL (75 aa)).

It belongs to the RimM family. In terms of assembly, binds ribosomal protein uS19.

It is found in the cytoplasm. Functionally, an accessory protein needed during the final step in the assembly of 30S ribosomal subunit, possibly for assembly of the head region. Essential for efficient processing of 16S rRNA. May be needed both before and after RbfA during the maturation of 16S rRNA. It has affinity for free ribosomal 30S subunits but not for 70S ribosomes. In Ruminiclostridium cellulolyticum (strain ATCC 35319 / DSM 5812 / JCM 6584 / H10) (Clostridium cellulolyticum), this protein is Ribosome maturation factor RimM.